The following is a 454-amino-acid chain: Protein disulfide-isomerase TMX3 (454 aa).

The first 24 residues, methionine 1 to cysteine 24, serve as a signal peptide directing secretion. In terms of domain architecture, Thioredoxin spans lysine 25–arginine 128. Residues lysine 25–proline 375 lie on the Lumenal side of the membrane. Catalysis depends on nucleophile residues cysteine 53 and cysteine 56. Cysteine 53 and cysteine 56 are disulfide-bonded. Residues asparagine 258 and asparagine 313 are each glycosylated (N-linked (GlcNAc...) asparagine). The chain crosses the membrane as a helical span at residues leucine 376–isoleucine 396. Topologically, residues tyrosine 397–aspartate 454 are cytoplasmic. A disordered region spans residues valine 412–aspartate 454. The span at glutamate 444–aspartate 454 shows a compositional bias: basic and acidic residues. The short motif at lysine 451–aspartate 454 is the Di-lysine motif element.

The protein belongs to the protein disulfide isomerase family. N-glycosylated. In terms of tissue distribution, widely expressed. Expressed in brain, testis, lung, skin, kidney, uterus, bone, stomach, liver, prostate, placenta, eye and muscle.

It is found in the endoplasmic reticulum membrane. It carries out the reaction Catalyzes the rearrangement of -S-S- bonds in proteins.. In terms of biological role, probable disulfide isomerase, which participates in the folding of proteins containing disulfide bonds. May act as a dithiol oxidase. Acts as a regulator of endoplasmic reticulum-mitochondria contact sites via its ability to regulate redox signals. This chain is Protein disulfide-isomerase TMX3 (TMX3), found in Homo sapiens (Human).